Consider the following 464-residue polypeptide: UPF0210 protein Cgl1545/cg1743 (464 aa).

This sequence belongs to the UPF0210 family. Homodimer.

This chain is UPF0210 protein Cgl1545/cg1743, found in Corynebacterium glutamicum (strain ATCC 13032 / DSM 20300 / JCM 1318 / BCRC 11384 / CCUG 27702 / LMG 3730 / NBRC 12168 / NCIMB 10025 / NRRL B-2784 / 534).